A 341-amino-acid chain; its full sequence is Arfaptin-2 (341 aa).

The interval 46–84 (NETSIVSGGYGGSGDGLIPTGSGRHPSHSTSPSGPGDEV) is disordered. Over residues 65-81 (TGSGRHPSHSTSPSGPG) the composition is skewed to low complexity. Phosphoserine is present on Ser-72. In terms of domain architecture, AH spans 121 to 321 (TVDLELELQI…NQKQLEQTLQ (201 aa)).

In terms of assembly, forms homodimers or heterodimers with ARFIP1. Interacts with RAC1. Specifically binds to GTP-bound ARF1 and ARF6, but binds to RAC1.GTP and RAC1.GDP with similar affinities. Interacts with ARL1. Interacts (via N-terminus) with IKBKB and IKBKG; these interactions inhibit activation of NF-kappa-B.

Its subcellular location is the golgi apparatus. The protein localises to the trans-Golgi network membrane. Functionally, plays a role in constitutive metalloproteinase (MMP) secretion from the trans Golgi network. May have important functions during vesicle biogenesis at certain cargo subdomains, which could be predominantly utilized by secreted MMPs, such as MMP7 and MMP2. Also involved in autophagy by regulating the starvation-dependent trafficking of ATG9A vesicles which deliver the phosphatidylinositol 4-kinase beta (PI4KB) to the autophagosome initiation site. Involved in phagophore growth during mitophagy by regulating ATG9A trafficking to mitochondria. In addition, plays a role in NF-kappa-B inhibition by interacting with IKBKB and IKBKG. The polypeptide is Arfaptin-2 (Mus musculus (Mouse)).